Here is a 469-residue protein sequence, read N- to C-terminus: MVEFPFEISPMFEGERVRKEGMFVELGGPKSLGLELVRAKPMDEIEDDKVTIVGPDLKEMEEGKTYPWAMIFNIGGELVEPDLESVVERRVHDFINYCQGIMHLNQRYDVWMRVSKDTAAKMDSFEPFGQAVMMLFKTELPFIEKMQVTFYTEQAEVEKQMETAKEIFKARDERTKDLHDEDVDVFYGCTLCQSFAPTNVCVVSPDRVSLCGAINWFDGRAAAKVDPEGPQFEIAKGDLLDANTGEYTGVNDIAKKLSAGEFDKIKLHSFFDSPHTSCGCFEVVGFYIPEVDGIGWVNREYQGMAPNGIGFSTMAGQTGGGKQIVGFLGIGINYFYSPKFIQADGGWNRVVWLPSMLKDKIIDTIPEDLKDKIATENDSTDIESLKAFLQEKGHPVVATWAAEEEEEEEEEEEEEVAVAAAPMMMPAAGFQMPAMPMMSGGSSGGIKLTFKNAKITIDKMIISEKKEKK.

The [Ni-Fe-S] cluster site is built by Cys189, Cys192, Cys278, and Cys280.

The protein belongs to the CdhC family. In terms of assembly, monomer. The ACDS complex is made up of alpha, epsilon, beta, gamma and delta chains with a probable stoichiometry of (alpha(2)epsilon(2))(4)-beta(8)-(gamma(1)delta(1))(8) (Potential). It depends on [Ni-Fe-S] cluster as a cofactor.

The catalysed reaction is Co(I)-[corrinoid Fe-S protein] + acetyl-CoA + H(+) = methyl-Co(III)-[corrinoid Fe-S protein] + CO + CoA. Its pathway is one-carbon metabolism; methanogenesis from acetate. Functionally, part of a complex that catalyzes the reversible cleavage of acetyl-CoA, allowing growth on acetate as sole source of carbon and energy. The alpha-epsilon complex generates CO from CO(2), while the beta subunit (this protein) combines the CO with CoA and a methyl group to form acetyl-CoA. The methyl group, which is incorporated into acetyl-CoA, is transferred to the beta subunit by a corrinoid iron-sulfur protein (the gamma-delta complex). The sequence is that of Acetyl-CoA decarbonylase/synthase complex subunit beta 1 (cdhC1) from Methanosarcina acetivorans (strain ATCC 35395 / DSM 2834 / JCM 12185 / C2A).